We begin with the raw amino-acid sequence, 115 residues long: Succinate dehydrogenase assembly factor 3, mitochondrial (115 aa).

This sequence belongs to the complex I LYR family. SDHAF3 subfamily. Interacts with the iron-sulfur protein subunit within the SDH catalytic dimer.

It localises to the mitochondrion matrix. Functionally, plays an essential role in the assembly of succinate dehydrogenase (SDH), an enzyme complex (also referred to as respiratory complex II) that is a component of both the tricarboxylic acid (TCA) cycle and the mitochondrial electron transport chain, and which couples the oxidation of succinate to fumarate with the reduction of ubiquinone (coenzyme Q) to ubiquinol. Promotes maturation of the iron-sulfur protein subunit of the SDH catalytic dimer, protecting it from the deleterious effects of oxidants. May act together with SDHAF1. The polypeptide is Succinate dehydrogenase assembly factor 3, mitochondrial (acn9) (Nematostella vectensis (Starlet sea anemone)).